Reading from the N-terminus, the 129-residue chain is MSWTEAEVRELKVGRYILIDDSPCRIVDITMSKPGKHGEAKGRIVAIGVFDNQKHSVVYPVKHKVKVPVITKKNAQVLSIANNEVQLMDSETFETFVIPVDPADLEKIKPGMEVPYWEAMGQRKIMLQN.

At Lys-36 the chain carries Hypusine.

Belongs to the eIF-5A family.

The protein resides in the cytoplasm. In terms of biological role, functions by promoting the formation of the first peptide bond. The polypeptide is Translation initiation factor 5A (Picrophilus torridus (strain ATCC 700027 / DSM 9790 / JCM 10055 / NBRC 100828 / KAW 2/3)).